The chain runs to 549 residues: Serine/threonine-protein phosphatase PPQ (549 aa).

The span at 1–13 (MRRSPSRSNNNFA) shows a compositional bias: polar residues. Disordered regions lie at residues 1 to 50 (MRRS…RSLP), 64 to 85 (YNTL…DNLL), 133 to 158 (TSST…NYSS), and 189 to 219 (SRVK…PKSS). Composition is skewed to low complexity over residues 16–32 (NCST…TTPS) and 68–83 (ASAG…SNDN). Over residues 205 to 217 (APSSPTSGIPNPK) the composition is skewed to polar residues. Aspartate 301, histidine 303, aspartate 329, and asparagine 361 together coordinate Mn(2+). Histidine 362 (proton donor) is an active-site residue. Positions 410 and 485 each coordinate Mn(2+).

Belongs to the PPP phosphatase family. PP-Z subfamily. Requires Mn(2+) as cofactor.

It carries out the reaction O-phospho-L-seryl-[protein] + H2O = L-seryl-[protein] + phosphate. The catalysed reaction is O-phospho-L-threonyl-[protein] + H2O = L-threonyl-[protein] + phosphate. Its function is as follows. Phosphatase involved in the regulation of protein synthesis. Affects translational accuracy. This chain is Serine/threonine-protein phosphatase PPQ (PPQ1), found in Saccharomyces cerevisiae (strain ATCC 204508 / S288c) (Baker's yeast).